The sequence spans 78 residues: Acyl carrier protein (78 aa).

One can recognise a Carrier domain in the interval 2-77 (STIEERVKKI…AAIDYVNAHQ (76 aa)). O-(pantetheine 4'-phosphoryl)serine is present on Ser-37.

This sequence belongs to the acyl carrier protein (ACP) family. Post-translationally, 4'-phosphopantetheine is transferred from CoA to a specific serine of apo-ACP by AcpS. This modification is essential for activity because fatty acids are bound in thioester linkage to the sulfhydryl of the prosthetic group.

It is found in the cytoplasm. Its pathway is lipid metabolism; fatty acid biosynthesis. In terms of biological role, carrier of the growing fatty acid chain in fatty acid biosynthesis. The sequence is that of Acyl carrier protein from Pseudomonas entomophila (strain L48).